We begin with the raw amino-acid sequence, 355 residues long: Epoxide hydrolase 2 (355 aa).

The 246-residue stretch at 78 to 323 folds into the AB hydrolase-1 domain; the sequence is VLLMVHGFPE…IRGASHWVQQ (246 aa). Asp152 serves as the catalytic Nucleophile. Residue Tyr263 is the Proton donor of the active site. His319 acts as the Proton acceptor in catalysis.

Belongs to the AB hydrolase superfamily. Epoxide hydrolase family.

It catalyses the reaction an epoxide + H2O = an ethanediol. It participates in lipid metabolism. Catalyzes the hydrolysis of epoxide-containing fatty acids. Active in vitro against trans-1,3-diphenylpropene oxide (t-DPPO), epoxyeicosatrienoic acids (EETs) including 8,9-EET, 11,12-EET and 14,15-EET and the linoleic acid metabolites 12,13-epoxy-9-octadecenoate (12,13-EpOME) and 9,10-epoxy-12-octadecenoate (9,10-EpOME). In Caenorhabditis elegans, this protein is Epoxide hydrolase 2.